Consider the following 328-residue polypeptide: MDFKNKKWLFLAPLAGYTDLPFRSVVKKFGVDVTTSEMVSSHSLVYAFDKTSKMLEKSPLEDHFMAQISGSKESVVKEAVEKINALEHVNGIDFNCGCPAPKVANHGNGSGLLKDLNHLVKLLKTIRENTSKKITSVKVRLGFEKKIPKEIAHALNDAPVDYVVVHGRTRSDKYQKDKIDYESIALMKKILKKPVIANGEIDSVKKAFEVLQITQADGLMIGRAALRAPWIFWQIRNNTTKLPAVVKKDLVLEHFDKMVEFYGDMGVIMFRKNLHAYAKGEMQASAFRNCVNTLTEIKSMRESIEEFFNQEMLQSEVPLWVELNQKSV.

FMN contacts are provided by residues 13-15 (PLA) and Gln-67. The Proton donor role is filled by Cys-98. Residues Lys-138, 198-200 (NGE), and 222-223 (GR) contribute to the FMN site.

It belongs to the Dus family. FMN is required as a cofactor.

The catalysed reaction is a 5,6-dihydrouridine in tRNA + NAD(+) = a uridine in tRNA + NADH + H(+). It carries out the reaction a 5,6-dihydrouridine in tRNA + NADP(+) = a uridine in tRNA + NADPH + H(+). In terms of biological role, catalyzes the synthesis of 5,6-dihydrouridine (D), a modified base found in the D-loop of most tRNAs, via the reduction of the C5-C6 double bond in target uridines. This Helicobacter pylori (strain ATCC 700392 / 26695) (Campylobacter pylori) protein is Probable tRNA-dihydrouridine synthase (dus).